Here is a 457-residue protein sequence, read N- to C-terminus: UDP-N-acetylmuramate--L-alanine ligase (457 aa).

Position 109 to 115 (109 to 115) interacts with ATP; sequence GTDGKTT.

It belongs to the MurCDEF family.

It is found in the cytoplasm. The catalysed reaction is UDP-N-acetyl-alpha-D-muramate + L-alanine + ATP = UDP-N-acetyl-alpha-D-muramoyl-L-alanine + ADP + phosphate + H(+). Its pathway is cell wall biogenesis; peptidoglycan biosynthesis. Functionally, cell wall formation. The chain is UDP-N-acetylmuramate--L-alanine ligase from Thermotoga sp. (strain RQ2).